The primary structure comprises 202 residues: MSHYFYLTPQILLPFSPLTSQEFDLIRRKAGASWQDETRWSDSSVTTYTGSYRKKQLDKSMCSQFSFRAGQHEPECKQMSLTNSSACHLLCWAGTQETTDIKGLFPDITRPFKKSFDVKHGVAHQIWDFGDCFPTPPNYGKYCVRPKKPAQEALINYSRRGKGVLKHLHGRCDSESKVCSSEDSEADRYSDYGWGGPSSPFN.

The interval 178-202 (VCSSEDSEADRYSDYGWGGPSSPFN) is disordered.

This is an uncharacterized protein from Homo sapiens (Human).